A 219-amino-acid polypeptide reads, in one-letter code: Redox-sensing transcriptional repressor Rex (219 aa).

The segment at residues 17–56 is a DNA-binding region (H-T-H motif); it reads RYLRYVEDLLNHDIMRISSSELSQRMGYTASQVRQDFNNF. 91 to 96 provides a ligand contact to NAD(+); sequence GVGNLG.

It belongs to the transcriptional regulatory Rex family. Homodimer.

The protein localises to the cytoplasm. Its function is as follows. Modulates transcription in response to changes in cellular NADH/NAD(+) redox state. The chain is Redox-sensing transcriptional repressor Rex from Caldicellulosiruptor saccharolyticus (strain ATCC 43494 / DSM 8903 / Tp8T 6331).